The primary structure comprises 287 residues: mRNA-capping enzyme regulatory subunit OPG124 (287 aa).

The protein belongs to the orthopoxvirus mRNA-capping enzyme regulatory subunit family. As to quaternary structure, interacts with the catalytic subunit OPG113.

Its subcellular location is the virion. In terms of biological role, regulatory subunit of the mRNA cap enzyme which stabilizes the catalytic subunit and enhances its methyltransferase activity through an allosteric mechanism. Heterodimeric mRNA capping enzyme catalyzes the linkage of a N7-methyl-guanosine moiety to the first transcribed nucleotide (cap 0 structure), whereas the methyltransferase OPG102 is responsible for a second methylation at the 2'-O position of the ribose (cap 1 structure). Also involved in early viral gene transcription termination and intermediate viral gene transcription initiation. Early gene transcription termination requires the termination factor VTF, the DNA-dependent ATPase NPH-I/OPG123 and the RAP94/OPG109 subunit of the viral RNA polymerase, as well as the presence of a specific termination motif. Binds, together with RAP94/OPG109, to the termination motif 5'-UUUUUNU-3' in the nascent early mRNA. This is mRNA-capping enzyme regulatory subunit OPG124 (OPG124) from Bos taurus (Bovine).